We begin with the raw amino-acid sequence, 2383 residues long: Reducing polyketide synthase rdc5 (2383 aa).

The region spanning 10 to 438 (RAPIAIIGMS…GTNAHLVLER (429 aa)) is the Ketosynthase family 3 (KS3) domain. Catalysis depends on for beta-ketoacyl synthase activity residues Cys186, His321, and His361. A malonyl-CoA:ACP transacylase (MAT) domain region spans residues 550–881 (FVFTGQGAQW…GFAAELFRRG (332 aa)). The N-terminal hotdog fold stretch occupies residues 930-1066 (KSLIGAERPS…GLFSINYEDS (137 aa)). The PKS/mFAS DH domain maps to 930–1253 (KSLIGAERPS…LAELEVEDAD (324 aa)). The dehydratase (DH) domain stretch occupies residues 932–1250 (LIGAERPSLD…DFHLAELEVE (319 aa)). Residue His962 is the Proton acceptor; for dehydratase activity of the active site. A C-terminal hotdog fold region spans residues 1094–1253 (VEVISKQAFY…LAELEVEDAD (160 aa)). The Proton donor; for dehydratase activity role is filled by Asp1160. Residues 1663–1977 (GLLNTLHFVS…QGKHVGKMIL (315 aa)) are enoyl reductase (ER) domain. Cys1776 serves as the catalytic Phosphocysteine intermediate. The segment at 2002–2182 (ATYLFIGGLG…VSVNLGIMRD (181 aa)) is ketoreductase (KR) domain. The region spanning 2300–2377 (AAGPIITKAL…QFAVQIAKKS (78 aa)) is the Carrier domain. Ser2337 is modified (O-(pantetheine 4'-phosphoryl)serine).

The protein operates within secondary metabolite biosynthesis. Functionally, reducing polyketide synthase; part of the gene cluster that mediates the biosynthesis of radicicol, a resorcylic acid lactone (RAL) that irreversibly inhibits the HSP90 molecular chaperone, an important target for cancer chemotherapy. The radicicol cluster encodes only two apparent post-PKS enzymes, a cytochrome P450 monooxygenase (rdc4) and a non-heme halogenase (rdc2) that could introduce the epoxide and the chlorine, respectively. If this cluster includes all the genes required for radicicol biosynthesis, the remaining structural features of radicicol are presumably generated by the PKSs rdc1 and rdc5. The C-2' ketone could arise if the R-PKS rdc5 and NR-PKS rdc1 each carry out four iterations, in contrast to the five iteration-three iteration split for the hypothemycin PKSs. The origin of the cis 5',6' double bond is not known. The radicicol R-PKS rdc5 ER domain may catalyze either double bond isomerization or reduction in the third iteration. This Metacordyceps chlamydosporia (Nematophagous fungus) protein is Reducing polyketide synthase rdc5.